We begin with the raw amino-acid sequence, 183 residues long: Photosystem I assembly protein Ycf4 (183 aa).

Transmembrane regions (helical) follow at residues 17-39 (NYLLLIIMLGGGISFFIVGFLSY) and 59-81 (FIPQGITMIFYGTMAICLSIYIY).

The protein belongs to the Ycf4 family.

It localises to the plastid. The protein localises to the chloroplast thylakoid membrane. Its function is as follows. Seems to be required for the assembly of the photosystem I complex. The protein is Photosystem I assembly protein Ycf4 of Cyanidium caldarium (Red alga).